The chain runs to 881 residues: DNA mismatch repair protein MutS (881 aa).

Residue Gly-626–Ser-633 coordinates ATP.

The protein belongs to the DNA mismatch repair MutS family.

Functionally, this protein is involved in the repair of mismatches in DNA. It is possible that it carries out the mismatch recognition step. This protein has a weak ATPase activity. The sequence is that of DNA mismatch repair protein MutS from Desulfosudis oleivorans (strain DSM 6200 / JCM 39069 / Hxd3) (Desulfococcus oleovorans).